The chain runs to 348 residues: uncharacterized protein (348 aa).

Belongs to the Mu gp47/PBSX XkdT family.

This is an uncharacterized protein from Bacillus subtilis (strain 168).